Here is an 881-residue protein sequence, read N- to C-terminus: Probable alpha/beta-glucosidase agdC (881 aa).

The signal sequence occupies residues 1 to 14 (MLRSLLLLAPLVGA). Residues Asn-171, Asn-293, and Asn-373 are each glycosylated (N-linked (GlcNAc...) asparagine). The active-site Nucleophile is the Asp-422. Glu-425 is a catalytic residue. The disordered stretch occupies residues 440–485 (YARDNDLPPAAPPVRPSNPRPLPGFPGDFQPSSSSKRSTKGSKVGL). Positions 448–463 (PAAPPVRPSNPRPLPG) are enriched in pro residues. The N-linked (GlcNAc...) asparagine glycan is linked to Asn-506. The active-site Proton donor is Asp-571. N-linked (GlcNAc...) asparagine glycans are attached at residues Asn-572, Asn-608, and Asn-742.

The protein belongs to the glycosyl hydrolase 31 family.

It localises to the secreted. The enzyme catalyses Hydrolysis of terminal, non-reducing (1-&gt;4)-linked alpha-D-glucose residues with release of alpha-D-glucose.. It carries out the reaction Hydrolysis of terminal, non-reducing beta-D-glucosyl residues with release of beta-D-glucose.. Glucosidase involved in the degradation of cellulosic biomass. Has both alpha- and beta-glucosidase activity. This chain is Probable alpha/beta-glucosidase agdC (agdC), found in Aspergillus fumigatus (strain CBS 144.89 / FGSC A1163 / CEA10) (Neosartorya fumigata).